Reading from the N-terminus, the 37-residue chain is Calcitonin gene-related peptide 1 (37 aa).

Residues Cys-2 and Cys-7 are joined by a disulfide bond. Position 37 is a phenylalanine amide (Phe-37).

This sequence belongs to the calcitonin family.

The protein resides in the secreted. Functionally, CGRP1/CALCA is a peptide hormone that induces vasodilation mediated by the CALCRL-RAMP1 receptor complex. Dilates a variety of vessels including the coronary, cerebral and systemic vasculature. Its abundance in the CNS also points toward a neurotransmitter or neuromodulator role. It also elevates platelet cAMP. CGRP1 can also bind and activate CALCR-RAMP1 (AMYR1) receptor complex. The sequence is that of Calcitonin gene-related peptide 1 (CALCA) from Sus scrofa (Pig).